We begin with the raw amino-acid sequence, 397 residues long: Lipoyl synthase 2, chloroplastic (397 aa).

The N-terminal 35 residues, 1-35 (MIEQSLSKPSFSLSIPIPKAPKSKSSFFCSYSKIR), are a transit peptide targeting the chloroplast. The segment at 49-85 (AKHPQNSTTINNGSSSSASVDLKNNEKGPYPYPGGGK) is disordered. Residues 54 to 67 (NSTTINNGSSSSAS) show a composition bias toward low complexity. The [4Fe-4S] cluster site is built by C128, C133, C139, C159, C163, C166, and S374. Residues 142–363 (GGGDGIATAT…KEYGESIGFR (222 aa)) form the Radical SAM core domain.

It belongs to the radical SAM superfamily. Lipoyl synthase family. It depends on [4Fe-4S] cluster as a cofactor.

It is found in the plastid. The protein resides in the chloroplast. It catalyses the reaction [[Fe-S] cluster scaffold protein carrying a second [4Fe-4S](2+) cluster] + N(6)-octanoyl-L-lysyl-[protein] + 2 oxidized [2Fe-2S]-[ferredoxin] + 2 S-adenosyl-L-methionine + 4 H(+) = [[Fe-S] cluster scaffold protein] + N(6)-[(R)-dihydrolipoyl]-L-lysyl-[protein] + 4 Fe(3+) + 2 hydrogen sulfide + 2 5'-deoxyadenosine + 2 L-methionine + 2 reduced [2Fe-2S]-[ferredoxin]. The protein operates within protein modification; protein lipoylation via endogenous pathway; protein N(6)-(lipoyl)lysine from octanoyl-[acyl-carrier-protein]: step 2/2. Its function is as follows. Catalyzes the radical-mediated insertion of two sulfur atoms into the C-6 and C-8 positions of the octanoyl moiety bound to the lipoyl domains of lipoate-dependent enzymes, thereby converting the octanoylated domains into lipoylated derivatives. The protein is Lipoyl synthase 2, chloroplastic of Populus trichocarpa (Western balsam poplar).